The following is a 350-amino-acid chain: Protein pelota homolog (350 aa).

Belongs to the eukaryotic release factor 1 family. Pelota subfamily. Monomer. It depends on a divalent metal cation as a cofactor.

The protein resides in the cytoplasm. Functionally, may function in recognizing stalled ribosomes, interact with stem-loop structures in stalled mRNA molecules, and effect endonucleolytic cleavage of the mRNA. May play a role in the release non-functional ribosomes and degradation of damaged mRNAs. Has endoribonuclease activity. The protein is Protein pelota homolog of Methanosarcina mazei (strain ATCC BAA-159 / DSM 3647 / Goe1 / Go1 / JCM 11833 / OCM 88) (Methanosarcina frisia).